Consider the following 557-residue polypeptide: Formate--tetrahydrofolate ligase (557 aa).

67 to 74 serves as a coordination point for ATP; sequence TPAGEGKS.

The protein belongs to the formate--tetrahydrofolate ligase family.

It catalyses the reaction (6S)-5,6,7,8-tetrahydrofolate + formate + ATP = (6R)-10-formyltetrahydrofolate + ADP + phosphate. It participates in one-carbon metabolism; tetrahydrofolate interconversion. This is Formate--tetrahydrofolate ligase from Latilactobacillus sakei subsp. sakei (strain 23K) (Lactobacillus sakei subsp. sakei).